The sequence spans 84 residues: MLGIHVKKTKEELIISWQFSKIHIPLCEITEVIEDNTYAGVEEKSAIRIGTAYGTTDRILIKTVKQNYLLFTTNRVSILNKIKA.

This sequence belongs to the UPF0457 family.

The protein is UPF0457 protein BT9727_3043 of Bacillus thuringiensis subsp. konkukian (strain 97-27).